A 136-amino-acid chain; its full sequence is General odorant-binding protein 57d (136 aa).

An N-terminal signal peptide occupies residues 1 to 29 (MPEKMSLRLVPHLACIIFILEIQFRIADS). Disulfide bonds link Cys33–Cys70, Cys66–Cys118, and Cys107–Cys127.

The protein belongs to the PBP/GOBP family.

In terms of biological role, present in the aqueous fluid surrounding olfactory sensory dendrites and are thought to aid in the capture and transport of hydrophobic odorants into and through this fluid. The sequence is that of General odorant-binding protein 57d from Drosophila melanogaster (Fruit fly).